A 475-amino-acid chain; its full sequence is MELRRKLCIVVAVFVIVIEFASANFVFKAQHKFAGKKKNLEHFKSHDTRRHSRMLASIDLPLGGDSRVDSVGLYFTKIKLGSPPKEYHVQVDTGSDILWINCKPCPKCPTKTNLNFRLSLFDMNASSTSKKVGCDDDFCSFISQSDSCQPALGCSYHIVYADESTSDGKFIRDMLTLEQVTGDLKTGPLGQEVVFGCGSDQSGQLGNGDSAVDGVMGFGQSNTSVLSQLAATGDAKRVFSHCLDNVKGGGIFAVGVVDSPKVKTTPMVPNQMHYNVMLMGMDVDGTSLDLPRSIVRNGGTIVDSGTTLAYFPKVLYDSLIETILARQPVKLHIVEETFQCFSFSTNVDEAFPPVSFEFEDSVKLTVYPHDYLFTLEEELYCFGWQAGGLTTDERSEVILLGDLVLSNKLVVYDLDNEVIGWADHNCSSSIKIKDGSGGVYSVGADNLSSAPRLLMITKLLTILSPLIVMAFTSLA.

The N-terminal stretch at 1–23 (MELRRKLCIVVAVFVIVIEFASA) is a signal peptide. Residues 74 to 422 (YFTKIKLGSP…DLDNEVIGWA (349 aa)) form the Peptidase A1 domain. The active site involves Asp-92. Asn-124 and Asn-222 each carry an N-linked (GlcNAc...) asparagine glycan. Asp-303 is a catalytic residue. N-linked (GlcNAc...) asparagine glycosylation is found at Asn-425 and Asn-446. Ser-449 is lipidated: GPI-anchor amidated serine. Residues 450–475 (APRLLMITKLLTILSPLIVMAFTSLA) constitute a propeptide, removed in mature form.

It belongs to the peptidase A1 family. In terms of tissue distribution, highly expressed in pollen and pollen tubes. Mostly expressed in inflorescence, flowers and siliques, and barely in leaves and seedlings.

It localises to the cell membrane. It is found in the cytoplasm. Its subcellular location is the cytosol. Functionally, displays aspartic proteolytic activity. Together with A36, contributes to pollen and ovule development, including the apical cell wall constitution of the growing pollen tubes. The polypeptide is Aspartic proteinase 39 (Arabidopsis thaliana (Mouse-ear cress)).